Consider the following 576-residue polypeptide: N-acetylmuramoyl-L-alanine amidase (576 aa).

The signal sequence occupies residues 1-21; sequence MAQGVLWILLGLLLWSDPGTA. Asn-77 carries an N-linked (GlcNAc...) asparagine glycan. Position 239 is a phosphoserine (Ser-239). Asn-274 and Asn-322 each carry deamidated asparagine. N-linked (GlcNAc...) asparagine glycosylation occurs at Asn-367. Residues 406–532 enclose the N-acetylmuramoyl-L-alanine amidase domain; it reads FLYVHHTYVP…RQLVRTDCPG (127 aa). His-410 lines the Zn(2+) pocket. Cys-419 and Cys-425 are oxidised to a cystine. Asn-485 carries N-linked (GlcNAc...) asparagine glycosylation. 2 residues coordinate Zn(2+): His-522 and Cys-530. The disordered stretch occupies residues 550-576; that stretch reads KPRPARSVSKRSRREPPPRTLPATDLQ.

The protein belongs to the N-acetylmuramoyl-L-alanine amidase 2 family. Requires Zn(2+) as cofactor. Strongly expressed in liver and fetal liver, and secreted into serum. Expressed to a much lesser extent in transverse colon, lymph nodes, heart, thymus, pancreas, descending colon, stomach and testis. Isoform 2 is not detected in the liver or serum.

The protein resides in the secreted. It localises to the membrane. It carries out the reaction Hydrolyzes the link between N-acetylmuramoyl residues and L-amino acid residues in certain cell-wall glycopeptides.. Functionally, may play a scavenger role by digesting biologically active peptidoglycan (PGN) into biologically inactive fragments. Has no direct bacteriolytic activity. The chain is N-acetylmuramoyl-L-alanine amidase (PGLYRP2) from Homo sapiens (Human).